The primary structure comprises 282 residues: E3 ubiquitin-protein ligase Siah1 (282 aa).

The disordered stretch occupies residues 1–28; that stretch reads MSRQTATALPTGTSKCPPSQRVPTLSGT. Residues 41-76 form an RING-type zinc finger; it reads CPVCFDYVLPPILQCQSGHLVCSNCRPKLTCCPTCR. The tract at residues 90–282 is SBD; the sequence is VANSVLFPCK…LGINVTISMC (193 aa). An SIAH-type zinc finger spans residues 93–153; the sequence is SVLFPCKYAS…VMPHLLHQHK (61 aa). Zn(2+) is bound by residues cysteine 98, cysteine 105, histidine 117, cysteine 121, cysteine 128, cysteine 135, histidine 147, and histidine 152.

This sequence belongs to the SINA (Seven in absentia) family. Homodimer.

It catalyses the reaction S-ubiquitinyl-[E2 ubiquitin-conjugating enzyme]-L-cysteine + [acceptor protein]-L-lysine = [E2 ubiquitin-conjugating enzyme]-L-cysteine + N(6)-ubiquitinyl-[acceptor protein]-L-lysine.. It functions in the pathway protein modification; protein ubiquitination. Its function is as follows. E3 ubiquitin-protein ligase that mediates ubiquitination and subsequent proteasomal degradation of target proteins. E3 ubiquitin ligases accept ubiquitin from an E2 ubiquitin-conjugating enzyme in the form of a thioester and then directly transfers the ubiquitin to targeted substrates. It probably triggers the ubiquitin-mediated degradation of different substrates. This Danio rerio (Zebrafish) protein is E3 ubiquitin-protein ligase Siah1 (siah1).